Reading from the N-terminus, the 466-residue chain is Cocosin 1 (466 aa).

The signal sequence occupies residues 1–22 (MGSSSLLSFSLCLLLLCHLSQA). 2 disulfide bridges follow: Cys-45–Cys-78 and Cys-121–Cys-288. 2 Cupin type-1 domains span residues 50–242 (LNAL…ELAR) and 294–443 (QNIG…DEAR).

This sequence belongs to the 11S seed storage protein (globulins) family. In terms of assembly, hexamer; each subunit is composed of an acidic and a basic chain derived from a single precursor and linked by a disulfide bond. Endosperm of the seeds.

Its function is as follows. Seed storage protein. The protein is Cocosin 1 of Cocos nucifera (Coconut palm).